The sequence spans 320 residues: MVGKSVVTLDGLSTNQILDLLHKAEYIDSHRKEVAHTCDGRVLATLFYEPSTRTRLSFETAMLRLGGKVIGFAGAQLASVTKGESIADTLKTVSNYVDVVAIRHPKEGAALVASRAASVPVINAGDGGHMHPTQTLADLATLQSRFGRITDLTVGLCGDLTFGRTVHSLIETLCRFGNVRFVLISPDELKTPQYVIDRINATDNCSYVEVRDLASVIGDLDVLYMTRVQKERFFNEDDYLRLRDTYILDEEKLQLAKPSMAVLHPLPRVNEIAVDVDDDPRAAYFEQVKNGMLVRMALESTVVGDELPGYEPLNSKEVHA.

Residues R53 and T54 each contribute to the carbamoyl phosphate site. K82 contacts L-aspartate. 3 residues coordinate carbamoyl phosphate: R103, H131, and Q134. Positions 164 and 227 each coordinate L-aspartate. Positions 266 and 267 each coordinate carbamoyl phosphate.

The protein belongs to the aspartate/ornithine carbamoyltransferase superfamily. ATCase family. As to quaternary structure, heterododecamer (2C3:3R2) of six catalytic PyrB chains organized as two trimers (C3), and six regulatory PyrI chains organized as three dimers (R2).

It catalyses the reaction carbamoyl phosphate + L-aspartate = N-carbamoyl-L-aspartate + phosphate + H(+). The protein operates within pyrimidine metabolism; UMP biosynthesis via de novo pathway; (S)-dihydroorotate from bicarbonate: step 2/3. Its function is as follows. Catalyzes the condensation of carbamoyl phosphate and aspartate to form carbamoyl aspartate and inorganic phosphate, the committed step in the de novo pyrimidine nucleotide biosynthesis pathway. The chain is Aspartate carbamoyltransferase catalytic subunit from Bifidobacterium longum subsp. infantis (strain ATCC 15697 / DSM 20088 / JCM 1222 / NCTC 11817 / S12).